Here is a 250-residue protein sequence, read N- to C-terminus: Ribosomal RNA small subunit methyltransferase J (250 aa).

S-adenosyl-L-methionine is bound by residues 101–102 (RD), 117–118 (ER), 153–154 (SS), and D171.

This sequence belongs to the methyltransferase superfamily. RsmJ family.

It is found in the cytoplasm. It catalyses the reaction guanosine(1516) in 16S rRNA + S-adenosyl-L-methionine = N(2)-methylguanosine(1516) in 16S rRNA + S-adenosyl-L-homocysteine + H(+). In terms of biological role, specifically methylates the guanosine in position 1516 of 16S rRNA. The polypeptide is Ribosomal RNA small subunit methyltransferase J (Escherichia coli O81 (strain ED1a)).